A 229-amino-acid polypeptide reads, in one-letter code: Potassium/proton antiporter CemA (229 aa).

Transmembrane regions (helical) follow at residues 7–27, 114–134, 154–174, and 189–209; these read FTPL…SLSF, LICF…LLIL, ILLL…ELMI, and IISG…KYWI.

The protein belongs to the CemA family.

The protein resides in the plastid. It localises to the chloroplast inner membrane. It carries out the reaction K(+)(in) + H(+)(out) = K(+)(out) + H(+)(in). Its function is as follows. Contributes to K(+)/H(+) antiport activity by supporting proton efflux to control proton extrusion and homeostasis in chloroplasts in a light-dependent manner to modulate photosynthesis. Prevents excessive induction of non-photochemical quenching (NPQ) under continuous-light conditions. Indirectly promotes efficient inorganic carbon uptake into chloroplasts. This is Potassium/proton antiporter CemA from Gossypium hirsutum (Upland cotton).